Reading from the N-terminus, the 155-residue chain is UPF0178 protein Gmet_1725 (155 aa).

This sequence belongs to the UPF0178 family.

This chain is UPF0178 protein Gmet_1725, found in Geobacter metallireducens (strain ATCC 53774 / DSM 7210 / GS-15).